The chain runs to 431 residues: Protein S-Myc (431 aa).

A Phosphotyrosine; by Tyr-kinases modification is found at Y36. The bHLH domain occupies 348–400; the sequence is ERRRNHNRMERQRRDIMRSSFLNLRDLVPELVHNEKAAKVVILKKATEYIHTL. The leucine-zipper stretch occupies residues 400–421; the sequence is LQADESKLLVERKKLYERQQQL.

As to quaternary structure, efficient DNA binding requires dimerization with another bHLH protein.

The protein localises to the nucleus. Functionally, has apoptosis-inducing activity. The sequence is that of Protein S-Myc (Mycs) from Mus musculus (Mouse).